The chain runs to 458 residues: Oxysterol-binding protein-related protein 3B (458 aa).

3 disordered regions span residues valine 47–tryptophan 66, aspartate 370–proline 401, and arginine 431–threonine 458. Residues glycine 375–glycine 396 show a composition bias toward basic and acidic residues. Over residues proline 443–threonine 458 the composition is skewed to polar residues.

It belongs to the OSBP family. In terms of tissue distribution, expressed in roots, leaves, stems and flowers.

Its function is as follows. May be involved in the transport of sterols. This chain is Oxysterol-binding protein-related protein 3B (ORP3B), found in Arabidopsis thaliana (Mouse-ear cress).